The following is a 417-amino-acid chain: NADH-quinone oxidoreductase subunit D (417 aa).

It belongs to the complex I 49 kDa subunit family. In terms of assembly, NDH-1 is composed of 14 different subunits. Subunits NuoB, C, D, E, F, and G constitute the peripheral sector of the complex.

It is found in the cell inner membrane. The enzyme catalyses a quinone + NADH + 5 H(+)(in) = a quinol + NAD(+) + 4 H(+)(out). NDH-1 shuttles electrons from NADH, via FMN and iron-sulfur (Fe-S) centers, to quinones in the respiratory chain. The immediate electron acceptor for the enzyme in this species is believed to be ubiquinone. Couples the redox reaction to proton translocation (for every two electrons transferred, four hydrogen ions are translocated across the cytoplasmic membrane), and thus conserves the redox energy in a proton gradient. The polypeptide is NADH-quinone oxidoreductase subunit D (Francisella tularensis subsp. mediasiatica (strain FSC147)).